A 60-amino-acid polypeptide reads, in one-letter code: Large ribosomal subunit protein bL32 (60 aa).

It belongs to the bacterial ribosomal protein bL32 family.

This chain is Large ribosomal subunit protein bL32, found in Clostridium perfringens (strain ATCC 13124 / DSM 756 / JCM 1290 / NCIMB 6125 / NCTC 8237 / Type A).